Reading from the N-terminus, the 326-residue chain is E3 ubiquitin-protein ligase SINAT3 (326 aa).

The tract at residues 1–44 (MDLDSMDCTSTMDVTDDEEIHQDRHSYASVSKHHHTNNNTTNVN) is disordered. The RING-type zinc finger occupies 63-99 (CPVCTNSMYPPIHQCHNGHTLCSTCKARVHNRCPTCR). The interval 113–306 (VAESLELPCK…KELKLRVTGR (194 aa)) is SBD. The segment at 116–176 (SLELPCKHMS…LVAHLRDDHK (61 aa)) adopts an SIAH-type zinc-finger fold. 8 residues coordinate Zn(2+): cysteine 121, cysteine 128, histidine 140, cysteine 144, cysteine 151, cysteine 158, histidine 170, and histidine 175.

Belongs to the SINA (Seven in absentia) family. Interacts with SINAT6. Interacts with WAV3. Interacts with FREE1. Interacts with ELC/VPS23A.

It localises to the endosome. It is found in the multivesicular body. The protein resides in the cytoplasmic vesicle. The protein localises to the autophagosome. The enzyme catalyses S-ubiquitinyl-[E2 ubiquitin-conjugating enzyme]-L-cysteine + [acceptor protein]-L-lysine = [E2 ubiquitin-conjugating enzyme]-L-cysteine + N(6)-ubiquitinyl-[acceptor protein]-L-lysine.. The protein operates within protein modification; protein ubiquitination. Functionally, E3 ubiquitin-protein ligase that mediates ubiquitination and subsequent proteasomal degradation of target proteins. E3 ubiquitin ligases accept ubiquitin from an E2 ubiquitin-conjugating enzyme in the form of a thioester and then directly transfers the ubiquitin to targeted substrates. It probably triggers the ubiquitin-mediated degradation of different substrates. Modulates directly the ubiquitination and proteasomal-dependent degradation of FREE1, a component of the ESCRT-I complex. Modulates directly the ubiquitination and proteasomal-dependent degradation of ELC/VPS23A, a component of the ESCRT-I complex. The protein is E3 ubiquitin-protein ligase SINAT3 of Arabidopsis thaliana (Mouse-ear cress).